Here is a 380-residue protein sequence, read N- to C-terminus: Cytochrome b (380 aa).

4 helical membrane passes run 33 to 53 (FGSL…FLAM), 77 to 98 (WLIR…YLHI), 113 to 133 (WNVG…GYVL), and 178 to 198 (FFAF…IHLL). The heme b site is built by H83 and H97. The heme b site is built by H182 and H196. An a ubiquinone-binding site is contributed by H201. 4 consecutive transmembrane segments (helical) span residues 226–246 (YKDL…ALFS), 288–308 (LGGV…PILH), 320–340 (ITQF…WIGG), and 347–367 (FIII…VLTP).

The protein belongs to the cytochrome b family. As to quaternary structure, the cytochrome bc1 complex contains 3 respiratory subunits (MT-CYB, CYC1 and UQCRFS1), 2 core proteins (UQCRC1 and UQCRC2) and probably 6 low-molecular weight proteins. The cofactor is heme b.

The protein resides in the mitochondrion inner membrane. Component of the ubiquinol-cytochrome c reductase complex (complex III or cytochrome b-c1 complex) that is part of the mitochondrial respiratory chain. The b-c1 complex mediates electron transfer from ubiquinol to cytochrome c. Contributes to the generation of a proton gradient across the mitochondrial membrane that is then used for ATP synthesis. The protein is Cytochrome b (mt-cyb) of Dactyloptena peterseni (Starry flying gurnard).